A 316-amino-acid chain; its full sequence is Protein YIPF2 (316 aa).

A2 carries the N-acetylalanine modification. The Cytoplasmic portion of the chain corresponds to 2-124 (ASADELTFHE…LRNRPDLYGP (123 aa)). The disordered stretch occupies residues 16–37 (TNLLADTPDAATTSRSDQLTPQ). The span at 25–36 (AATTSRSDQLTP) shows a compositional bias: polar residues. Residues 125-145 (FWICATLAFVLAVTGNLTLVL) form a helical membrane-spanning segment. Topologically, residues 146 to 163 (AQRRDPSIHYSPQFHKVT) are lumenal. A helical transmembrane segment spans residues 164 to 184 (VAGISIYCYAWLVPLALWGFL). The Cytoplasmic portion of the chain corresponds to 185 to 196 (RWRKGVQERMGP). The helical transmembrane segment at 197–219 (YTFLETVCIYGYSLFVFIPMVVL) threads the bilayer. Residues 220–231 (WLIPVPWLQWLF) lie on the Lumenal side of the membrane. The chain crosses the membrane as a helical span at residues 232 to 252 (GALALGLSAAGLVFTLWPVVR). Over 253–256 (EDTR) the chain is Cytoplasmic. The chain crosses the membrane as a helical span at residues 257–277 (LVATVLLSVVVLLHALLAMGC). At 278–316 (KLYFFQSLPPENVAPPPQITSLPSNIALSPTLPQSLAPS) the chain is on the lumenal side.

The protein belongs to the YIP1 family. As to quaternary structure, interacts with YIPF6; this interaction may stabilize YIPF2. May also form a ternary complex with YIPF1 and YIPF6.

The protein localises to the golgi apparatus. It is found in the cis-Golgi network membrane. The protein resides in the trans-Golgi network membrane. It localises to the late endosome membrane. The sequence is that of Protein YIPF2 (YIPF2) from Homo sapiens (Human).